A 227-amino-acid chain; its full sequence is 7-cyano-7-deazaguanine synthase (227 aa).

8-18 serves as a coordination point for ATP; the sequence is FSGGQDSTTCL. Cys-187, Cys-196, Cys-199, and Cys-202 together coordinate Zn(2+).

It belongs to the QueC family. It depends on Zn(2+) as a cofactor.

The catalysed reaction is 7-carboxy-7-deazaguanine + NH4(+) + ATP = 7-cyano-7-deazaguanine + ADP + phosphate + H2O + H(+). Its pathway is purine metabolism; 7-cyano-7-deazaguanine biosynthesis. Functionally, catalyzes the ATP-dependent conversion of 7-carboxy-7-deazaguanine (CDG) to 7-cyano-7-deazaguanine (preQ(0)). In Aliivibrio salmonicida (strain LFI1238) (Vibrio salmonicida (strain LFI1238)), this protein is 7-cyano-7-deazaguanine synthase.